The primary structure comprises 127 residues: Small ribosomal subunit protein bS6 (127 aa).

The tract at residues 99-127 (PSPMMKEEKSKSMMPGDAAPAAPAETAAA) is disordered. Residues 110 to 127 (SMMPGDAAPAAPAETAAA) are compositionally biased toward low complexity.

It belongs to the bacterial ribosomal protein bS6 family.

In terms of biological role, binds together with bS18 to 16S ribosomal RNA. The sequence is that of Small ribosomal subunit protein bS6 from Dechloromonas aromatica (strain RCB).